The chain runs to 31 residues: Cytochrome b6-f complex subunit 6 (31 aa).

A helical transmembrane segment spans residues A3–F23.

This sequence belongs to the PetL family. The 4 large subunits of the cytochrome b6-f complex are cytochrome b6, subunit IV (17 kDa polypeptide, PetD), cytochrome f and the Rieske protein, while the 4 small subunits are PetG, PetL, PetM and PetN. The complex functions as a dimer.

Its subcellular location is the plastid. The protein localises to the chloroplast thylakoid membrane. Functionally, component of the cytochrome b6-f complex, which mediates electron transfer between photosystem II (PSII) and photosystem I (PSI), cyclic electron flow around PSI, and state transitions. PetL is important for photoautotrophic growth as well as for electron transfer efficiency and stability of the cytochrome b6-f complex. This is Cytochrome b6-f complex subunit 6 from Emiliania huxleyi (Coccolithophore).